The primary structure comprises 1575 residues: Ovochymase (1575 aa).

Positions 1–19 (MIVTFVALALSCCTPQVTA) are cleaved as a signal peptide. The Peptidase S1 1 domain maps to 36–280 (IVGGEMAKLG…YSSWIANYTQ (245 aa)). A disulfide bond links Cys61 and Cys77. Residues His76 and Asp132 each act as charge relay system in the active site. Cystine bridges form between Cys166–Cys233, Cys199–Cys212, and Cys223–Cys256. Catalysis depends on Ser227, which acts as the Charge relay system. Asn277 and Asn303 each carry an N-linked (GlcNAc...) asparagine glycan. 4 cysteine pairs are disulfide-bonded: Cys300–Cys330, Cys358–Cys386, Cys432–Cys460, and Cys486–Cys507. CUB domains are found at residues 300-423 (CSSN…FHAV) and 432-545 (CGGI…YYFS). 3 N-linked (GlcNAc...) asparagine glycosylation sites follow: Asn497, Asn513, and Asn549. A Peptidase S1 2 domain is found at 575-810 (IVNGDIAIAG…YIDWIIATAN (236 aa)). An intrachain disulfide couples Cys602 to Cys618. Residues His617 and Asp665 each act as charge relay system in the active site. 3 disulfide bridges follow: Cys700–Cys766, Cys730–Cys745, and Cys756–Cys786. Asn748 carries N-linked (GlcNAc...) asparagine glycosylation. The active-site Charge relay system is the Ser760. Asn810 carries an N-linked (GlcNAc...) asparagine glycan. Cystine bridges form between Cys830–Cys859, Cys889–Cys913, Cys956–Cys984, Cys1012–Cys1034, Cys1080–Cys1108, Cys1135–Cys1158, and Cys1221–Cys1246. 4 CUB domains span residues 830 to 949 (CIQL…YRLE), 956 to 1070 (CGQL…FVEL), 1080 to 1197 (CGGV…YTAV), and 1221 to 1341 (CQDS…YKLM). 4 N-linked (GlcNAc...) asparagine glycosylation sites follow: Asn968, Asn1027, Asn1087, and Asn1090. N-linked (GlcNAc...) asparagine glycosylation occurs at Asn1273. Residues 1314 to 1575 (YNGGEISMLF…FLKWITKIIQ (262 aa)) enclose the Peptidase S1 3 domain. Cystine bridges form between Cys1376-Cys1392 and Cys1493-Cys1507. Asn1511 carries N-linked (GlcNAc...) asparagine glycosylation.

The protein belongs to the peptidase S1 family. Expressed in the testis and ovary. Expressed in the gonads and gametes. Expressed in the follicle cells covering the vitelline coat of ovarian egg.

The protein resides in the secreted. In terms of biological role, may be responsible for elevation of the vitelline coat at the late developmental stage of oogenesis and during fertilization in ovarian eggs. The sequence is that of Ovochymase from Halocynthia roretzi (Sea squirt).